The primary structure comprises 181 residues: Ribulose bisphosphate carboxylase small subunit 3B, chloroplastic (181 aa).

The transit peptide at 1-54 directs the protein to the chloroplast; the sequence is MASSMLSSAAVVTSPAQATMVAPFTGLKSSAAFPVTRKTNKDITSIASNGGRVS.

It belongs to the RuBisCO small chain family. As to quaternary structure, heterohexadecamer of 8 large and 8 small subunits.

The protein localises to the plastid. The protein resides in the chloroplast. Its function is as follows. RuBisCO catalyzes two reactions: the carboxylation of D-ribulose 1,5-bisphosphate, the primary event in carbon dioxide fixation, as well as the oxidative fragmentation of the pentose substrate. Both reactions occur simultaneously and in competition at the same active site. Although the small subunit is not catalytic it is essential for maximal activity. This chain is Ribulose bisphosphate carboxylase small subunit 3B, chloroplastic (RBCS-3B), found in Arabidopsis thaliana (Mouse-ear cress).